The chain runs to 491 residues: Peptidyl-prolyl isomerase CWC27 (491 aa).

Residues 11 to 167 (TNGKVIIDTT…IPPKIRRIHI (157 aa)) enclose the PPIase cyclophilin-type domain. Basic and acidic residues-rich tracts occupy residues 186 to 202 (AQQK…EQRE), 268 to 298 (DLGK…REKA), and 306 to 316 (AEIKRMEEDLR). 2 disordered regions span residues 186-427 (AQQK…IEVD) and 464-491 (RDLL…GRNR). Residues 277 to 327 (ASEEKKAVDLKNIRAQHEREKAGGSAARQAEIKRMEEDLRRLKKRSGSVSD) adopt a coiled-coil conformation. Residues 323–333 (GSVSDSESDSS) show a composition bias toward low complexity. Basic residues predominate over residues 352-367 (ASKRGRAAMKAGNKRG). 2 stretches are compositionally biased toward acidic residues: residues 391–406 (DEPE…EGEA) and 418–427 (AEEEGGIEVD). Residues 482–491 (RTVRNSGRNR) are compositionally biased toward basic residues.

This sequence belongs to the cyclophilin-type PPIase family. CWC27 subfamily. As to quaternary structure, associated with the spliceosome.

It localises to the cytoplasm. The protein localises to the nucleus. It carries out the reaction [protein]-peptidylproline (omega=180) = [protein]-peptidylproline (omega=0). Functionally, PPIases accelerate the folding of proteins. It catalyzes the cis-trans isomerization of proline imidic peptide bonds in oligopeptides. Involved in pre-mRNA splicing. The protein is Peptidyl-prolyl isomerase CWC27 (CWC27) of Cryptococcus neoformans var. neoformans serotype D (strain B-3501A) (Filobasidiella neoformans).